Consider the following 375-residue polypeptide: Chaperone protein DnaJ (375 aa).

Residues 5-70 (DYYEVLGVNR…QKKGAYDRYG (66 aa)) form the J domain. The CR-type zinc finger occupies 134–212 (GAEKTIRIPT…CGGAGRVKKQ (79 aa)). Zn(2+) contacts are provided by cysteine 147, cysteine 150, cysteine 164, cysteine 167, cysteine 186, cysteine 189, cysteine 200, and cysteine 203. 4 CXXCXGXG motif repeats span residues 147-154 (CGTCHGSG), 164-171 (CPTCGGAG), 186-193 (CPKCHGTG), and 200-207 (CGDCGGAG).

This sequence belongs to the DnaJ family. Homodimer. Zn(2+) is required as a cofactor.

The protein localises to the cytoplasm. Its function is as follows. Participates actively in the response to hyperosmotic and heat shock by preventing the aggregation of stress-denatured proteins and by disaggregating proteins, also in an autonomous, DnaK-independent fashion. Unfolded proteins bind initially to DnaJ; upon interaction with the DnaJ-bound protein, DnaK hydrolyzes its bound ATP, resulting in the formation of a stable complex. GrpE releases ADP from DnaK; ATP binding to DnaK triggers the release of the substrate protein, thus completing the reaction cycle. Several rounds of ATP-dependent interactions between DnaJ, DnaK and GrpE are required for fully efficient folding. Also involved, together with DnaK and GrpE, in the DNA replication of plasmids through activation of initiation proteins. The sequence is that of Chaperone protein DnaJ from Azoarcus sp. (strain BH72).